We begin with the raw amino-acid sequence, 674 residues long: Fidgetin-like protein 1 (674 aa).

The segment at 157 to 179 (SQESDSLPNSAHDRDRTQDFPES) is disordered. Over residues 167 to 179 (AHDRDRTQDFPES) the composition is skewed to basic and acidic residues. K225 participates in a covalent cross-link: Glycyl lysine isopeptide (Lys-Gly) (interchain with G-Cter in SUMO2). Position 259 is a phosphoserine (S259). Residues 295-344 (FKTAKEQLWVDQQKKYHQPQRASGSSYGGVKKSLGASRSRGILGKFVPPI) form a necessary and sufficient for interaction with RAD51 region. K339 is subject to N6-acetyllysine. Residues A404 and 444 to 449 (GTGKTL) contribute to the ATP site.

The protein belongs to the AAA ATPase family. Hexamer. Interacts (via N-terminal one-half region) with RAD51; the interaction is direct. Interacts (via N-terminal one-half region) with SPIDR (via the C-terminal region); the interaction is direct. Interacts with FIRRM; may regulate homologous recombination. Mg(2+) serves as cofactor.

It localises to the nucleus. The protein resides in the cytoplasm. It is found in the perinuclear region. It carries out the reaction ATP + H2O = ADP + phosphate + H(+). In terms of biological role, involved in DNA double-strand break (DBS) repair via homologous recombination (HR). Recruited at DSB sites independently of BRCA2, RAD51 and RAD51 paralogs in a H2AX-dependent manner. May regulate osteoblast proliferation and differentiation. May play a role in the control of male meiosis dynamic. This Homo sapiens (Human) protein is Fidgetin-like protein 1 (FIGNL1).